The chain runs to 351 residues: MYSLARPFLFSLDAERAHGLGLSALDLAYRTGTTPLLAARIAPMPSTVFGLTFPNPVGLAAGLDKNGEHIDALFALGFGFVEIGTITPRPQAGNPQPRLFRLPAHNAIINRMGFNNAGVDALVRNVERARNRRGMLGINIGKNKDTPNEQAADDYIACLDKVYPLADYITVNISSPNTAGLRELQEETSLRQLVSQLRERQESLAARYGRRVPMLVKVAPDLSERDIDAAARVLGELQVDGVIATNTTIDHSKVAGDPLANEAGGLSGAPVLEQSTLVLRRLRARLPESMPLIGVGGILSGADAVAKMAAGAALVQCYSGLIFRGPSLVSECVEAIRRRREAPSRGAVAPL.

FMN-binding positions include 61–65 (AGLDK) and T85. K65 is a binding site for substrate. 110–114 (NRMGF) lines the substrate pocket. The FMN site is built by N139 and N172. Position 172 (N172) interacts with substrate. S175 (nucleophile) is an active-site residue. Substrate is bound at residue N177. Residues K217 and T245 each coordinate FMN. Residue 246-247 (NT) participates in substrate binding. FMN is bound by residues G268, G297, and 318–319 (YS).

It belongs to the dihydroorotate dehydrogenase family. Type 2 subfamily. Monomer. Requires FMN as cofactor.

It localises to the cell membrane. It catalyses the reaction (S)-dihydroorotate + a quinone = orotate + a quinol. The protein operates within pyrimidine metabolism; UMP biosynthesis via de novo pathway; orotate from (S)-dihydroorotate (quinone route): step 1/1. Functionally, catalyzes the conversion of dihydroorotate to orotate with quinone as electron acceptor. The polypeptide is Dihydroorotate dehydrogenase (quinone) (Stenotrophomonas maltophilia (strain R551-3)).